A 355-amino-acid chain; its full sequence is Homeobox protein knotted-1-like LET6 (355 aa).

Residues 75–96 (PFMDNNNNNNPQEDNNSSSSSI) are disordered. A compositionally biased stretch (low complexity) spans 79-96 (NNNNNNPQEDNNSSSSSI). In terms of domain architecture, ELK spans 237–257 (ELKGQLLRKYSGYLGSLKQEF). Residues 258 to 321 (MKKRKKGKLP…NQRKRHWKPS (64 aa)) constitute a DNA-binding region (homeobox; TALE-type).

It belongs to the TALE/KNOX homeobox family. In terms of tissue distribution, expressed in developing lateral organs and developing ovaries in flowers.

The protein resides in the nucleus. Its function is as follows. May have a role to play in formative events in ovule and embryo morphogenesis. Probably binds to the DNA sequence 5'-TGAC-3'. This Solanum lycopersicum (Tomato) protein is Homeobox protein knotted-1-like LET6 (LET6).